Reading from the N-terminus, the 127-residue chain is Small ribosomal subunit protein uS13 (127 aa).

Basic residues predominate over residues 95 to 118 (GLPVRGQRTHTNARTRKGPKKGLV). The disordered stretch occupies residues 95 to 127 (GLPVRGQRTHTNARTRKGPKKGLVRKAAAPAPK).

It belongs to the universal ribosomal protein uS13 family. In terms of assembly, part of the 30S ribosomal subunit. Forms a loose heterodimer with protein S19. Forms two bridges to the 50S subunit in the 70S ribosome.

Located at the top of the head of the 30S subunit, it contacts several helices of the 16S rRNA. In the 70S ribosome it contacts the 23S rRNA (bridge B1a) and protein L5 of the 50S subunit (bridge B1b), connecting the 2 subunits; these bridges are implicated in subunit movement. Contacts the tRNAs in the A and P-sites. The protein is Small ribosomal subunit protein uS13 of Anaeromyxobacter sp. (strain Fw109-5).